The chain runs to 316 residues: Lipoyl synthase (316 aa).

7 residues coordinate [4Fe-4S] cluster: C60, C65, C71, C86, C90, C93, and S297. Positions 72-286 (WEDREATFLI…KDEADEVGFT (215 aa)) constitute a Radical SAM core domain.

Belongs to the radical SAM superfamily. Lipoyl synthase family. [4Fe-4S] cluster is required as a cofactor.

Its subcellular location is the cytoplasm. It catalyses the reaction [[Fe-S] cluster scaffold protein carrying a second [4Fe-4S](2+) cluster] + N(6)-octanoyl-L-lysyl-[protein] + 2 oxidized [2Fe-2S]-[ferredoxin] + 2 S-adenosyl-L-methionine + 4 H(+) = [[Fe-S] cluster scaffold protein] + N(6)-[(R)-dihydrolipoyl]-L-lysyl-[protein] + 4 Fe(3+) + 2 hydrogen sulfide + 2 5'-deoxyadenosine + 2 L-methionine + 2 reduced [2Fe-2S]-[ferredoxin]. Its pathway is protein modification; protein lipoylation via endogenous pathway; protein N(6)-(lipoyl)lysine from octanoyl-[acyl-carrier-protein]: step 2/2. In terms of biological role, catalyzes the radical-mediated insertion of two sulfur atoms into the C-6 and C-8 positions of the octanoyl moiety bound to the lipoyl domains of lipoate-dependent enzymes, thereby converting the octanoylated domains into lipoylated derivatives. This is Lipoyl synthase from Nocardioides sp. (strain ATCC BAA-499 / JS614).